The chain runs to 548 residues: Nodulation protein NolO (548 aa).

It belongs to the NodU/CmcH family.

Involved in 6-O-carbamoylation of Nod-factors. This Bradyrhizobium diazoefficiens (strain JCM 10833 / BCRC 13528 / IAM 13628 / NBRC 14792 / USDA 110) protein is Nodulation protein NolO (nolO).